The following is a 152-amino-acid chain: Antiholin-like protein LrgA (152 aa).

The next 4 membrane-spanning stretches (helical) occupy residues 23-43 (YSIFQQALTIAVILLISKIIE), 45-65 (FMPIPMPASVIGLVLLFIALC), 77-97 (VGTALTNNIGFLFVPAGISVI), and 108-128 (ILIILLIIISTLLLLICTGFA).

Belongs to the CidA/LrgA family. LrgA subfamily.

The protein resides in the cell membrane. Inhibits the expression or activity of extracellular murein hydrolases by interacting, possibly with LrgB, with the holin-like proteins CidA and/or CidB. The LrgAB and CidAB proteins may affect the proton motive force of the membrane. May be involved in programmed cell death (PCD), possibly triggering PCD in response to antibiotics and environmental stresses. This chain is Antiholin-like protein LrgA, found in Staphylococcus epidermidis (strain ATCC 35984 / DSM 28319 / BCRC 17069 / CCUG 31568 / BM 3577 / RP62A).